Consider the following 342-residue polypeptide: GTPase Obg (342 aa).

Residues 1–159 (MKFLDEAKVY…MWIWLRLKLI (159 aa)) enclose the Obg domain. Residues 160–327 (ADAGLVGLPN…ALRALQTEID (168 aa)) form the OBG-type G domain. GTP-binding positions include 166 to 173 (GLPNAGKS), 191 to 195 (FTTLH), 212 to 215 (DIPG), 279 to 282 (SKAD), and 308 to 310 (SSA). Ser173 and Thr193 together coordinate Mg(2+).

Belongs to the TRAFAC class OBG-HflX-like GTPase superfamily. OBG GTPase family. In terms of assembly, monomer. Mg(2+) serves as cofactor.

The protein localises to the cytoplasm. Its function is as follows. An essential GTPase which binds GTP, GDP and possibly (p)ppGpp with moderate affinity, with high nucleotide exchange rates and a fairly low GTP hydrolysis rate. Plays a role in control of the cell cycle, stress response, ribosome biogenesis and in those bacteria that undergo differentiation, in morphogenesis control. This Methylobacterium radiotolerans (strain ATCC 27329 / DSM 1819 / JCM 2831 / NBRC 15690 / NCIMB 10815 / 0-1) protein is GTPase Obg.